The primary structure comprises 254 residues: MSLRLGVNIDHVATIRNARGASYPEPVRAAELALIAGADGITAHLREDRRHISDADIAVLTDLCHKRGKPLNFEMAVTDEMVGIALNARPHAACLVPERREEVTTEGGLDVIKGQKRIADATARLRTVGARVSLFIEPDPDQIRACVTAGAQVVELHTGAYCDAARAGETARAEAILKRLKAGAALAHELGLEVHAGHGIDYATVKPVAAIPQIAELNIGHFLIGEAIFVGLPEAIHRMRALMEAARVELEVLA.

Asn-8 provides a ligand contact to 3-amino-2-oxopropyl phosphate. A 1-deoxy-D-xylulose 5-phosphate-binding site is contributed by 10–11; the sequence is DH. Residue Arg-19 participates in 3-amino-2-oxopropyl phosphate binding. The active-site Proton acceptor is His-44. Positions 46 and 51 each coordinate 1-deoxy-D-xylulose 5-phosphate. Residue Glu-74 is the Proton acceptor of the active site. 1-deoxy-D-xylulose 5-phosphate is bound at residue Thr-104. His-198 serves as the catalytic Proton donor. 3-amino-2-oxopropyl phosphate is bound by residues Gly-199 and 220–221; that span reads GH.

Belongs to the PNP synthase family. As to quaternary structure, homooctamer; tetramer of dimers.

It is found in the cytoplasm. The enzyme catalyses 3-amino-2-oxopropyl phosphate + 1-deoxy-D-xylulose 5-phosphate = pyridoxine 5'-phosphate + phosphate + 2 H2O + H(+). The protein operates within cofactor biosynthesis; pyridoxine 5'-phosphate biosynthesis; pyridoxine 5'-phosphate from D-erythrose 4-phosphate: step 5/5. Catalyzes the complicated ring closure reaction between the two acyclic compounds 1-deoxy-D-xylulose-5-phosphate (DXP) and 3-amino-2-oxopropyl phosphate (1-amino-acetone-3-phosphate or AAP) to form pyridoxine 5'-phosphate (PNP) and inorganic phosphate. The sequence is that of Pyridoxine 5'-phosphate synthase from Caulobacter vibrioides (strain ATCC 19089 / CIP 103742 / CB 15) (Caulobacter crescentus).